A 110-amino-acid chain; its full sequence is Cell cycle protein GpsB (110 aa).

Residues 32 to 73 (LDDVIKDYENYLEQIEKLQMENRRLQQALDKKESEASNVRNS) adopt a coiled-coil conformation.

The protein belongs to the GpsB family. Forms polymers through the coiled coil domains. Interacts with PBP1, MreC and EzrA.

The protein localises to the cytoplasm. Its function is as follows. Divisome component that associates with the complex late in its assembly, after the Z-ring is formed, and is dependent on DivIC and PBP2B for its recruitment to the divisome. Together with EzrA, is a key component of the system that regulates PBP1 localization during cell cycle progression. Its main role could be the removal of PBP1 from the cell pole after pole maturation is completed. Also contributes to the recruitment of PBP1 to the division complex. Not essential for septum formation. This chain is Cell cycle protein GpsB, found in Streptococcus agalactiae serotype Ia (strain ATCC 27591 / A909 / CDC SS700).